A 102-amino-acid chain; its full sequence is NADH-quinone oxidoreductase subunit K (102 aa).

Helical transmembrane passes span 6-26 (MEHG…GLLI), 30-50 (LLYI…AFVV), and 65-85 (ILVI…LLLL).

It belongs to the complex I subunit 4L family. NDH-1 is composed of 13 different subunits. Subunits NuoA, H, J, K, L, M, N constitute the membrane sector of the complex.

The protein resides in the cell inner membrane. It carries out the reaction a quinone + NADH + 5 H(+)(in) = a quinol + NAD(+) + 4 H(+)(out). Functionally, NDH-1 shuttles electrons from NADH, via FMN and iron-sulfur (Fe-S) centers, to quinones in the respiratory chain. The immediate electron acceptor for the enzyme in this species is believed to be ubiquinone. Couples the redox reaction to proton translocation (for every two electrons transferred, four hydrogen ions are translocated across the cytoplasmic membrane), and thus conserves the redox energy in a proton gradient. The protein is NADH-quinone oxidoreductase subunit K of Shewanella oneidensis (strain ATCC 700550 / JCM 31522 / CIP 106686 / LMG 19005 / NCIMB 14063 / MR-1).